A 306-amino-acid polypeptide reads, in one-letter code: LysM and putative peptidoglycan-binding domain-containing protein 3 (306 aa).

Residues 1 to 217 are Extracellular-facing; the sequence is MAGRHQNRSF…PYYGADWGIG (217 aa). Asn-7 carries N-linked (GlcNAc...) asparagine glycosylation. Ser-55 bears the Phosphoserine mark. Residues 65 to 109 form the LysM domain; it reads LTKDIQEGDTLNAIALQYCCTVADIKRVNNLISDQDFFALRSIKI. Residues 218-238 form a helical membrane-spanning segment; that stretch reads WWTAVVIMLIVGIITPVFYLL. At 239–306 the chain is on the cytoplasmic side; sequence YYEILAKVDV…SQSPAAQQET (68 aa).

It localises to the cell membrane. The protein localises to the golgi apparatus. Essential for Golgi structural integrity. The protein is LysM and putative peptidoglycan-binding domain-containing protein 3 (LYSMD3) of Homo sapiens (Human).